An 894-amino-acid polypeptide reads, in one-letter code: GTPase-activating protein GYP5 (894 aa).

A compositionally biased stretch (basic and acidic residues) spans 1 to 23 (MSSDKSIEKNTDTIASEVHEGDN). The segment at 1 to 324 (MSSDKSIEKN…VPPPLEEEMK (324 aa)) is disordered. Ser25 and Ser30 each carry phosphoserine. Thr89 carries the phosphothreonine modification. Over residues 134 to 164 (IEKEYDAVKENEKVYADTKEVVSSPENREVT) the composition is skewed to basic and acidic residues. Polar residues-rich tracts occupy residues 184–200 (GTTT…SSEV) and 268–279 (SSENEVSAIPTT). At Ser389 the chain carries Phosphoserine. Positions 451–630 (GIPPQIRGII…RIFDIVFVEG (180 aa)) constitute a Rab-GAP TBC domain. Residues 732 to 872 (EKEQKKEDHY…INKEQVSTAS (141 aa)) adopt a coiled-coil conformation.

The protein belongs to the GYP5 family. As to quaternary structure, interacts with GYL1 and RVS167; and is part of SEC4-containing complexes.

The protein resides in the cytoplasm. It is found in the bud. It localises to the bud neck. GTPase-activating protein which accelerates the GTP hydrolysis rate of YPT1 and SEC4. Involved in ER to Golgi trafficking and polarized exocytosis. The sequence is that of GTPase-activating protein GYP5 (GYP5) from Saccharomyces cerevisiae (strain ATCC 204508 / S288c) (Baker's yeast).